A 430-amino-acid chain; its full sequence is Serine hydroxymethyltransferase (430 aa).

Residue 120 to 122 (GHI) coordinates (6S)-5,6,7,8-tetrahydrofolate. Position 226 is an N6-(pyridoxal phosphate)lysine (Lys226).

Belongs to the SHMT family. In terms of assembly, homodimer. It depends on pyridoxal 5'-phosphate as a cofactor.

The protein resides in the cytoplasm. Its pathway is amino-acid biosynthesis; glycine biosynthesis; glycine from L-serine: step 1/1. Catalyzes the reversible interconversion of serine and glycine with a modified folate serving as the one-carbon carrier. Also exhibits a pteridine-independent aldolase activity toward beta-hydroxyamino acids, producing glycine and aldehydes, via a retro-aldol mechanism. This Pyrobaculum neutrophilum (strain DSM 2338 / JCM 9278 / NBRC 100436 / V24Sta) (Thermoproteus neutrophilus) protein is Serine hydroxymethyltransferase.